The primary structure comprises 346 residues: S-adenosylmethionine:tRNA ribosyltransferase-isomerase (346 aa).

This sequence belongs to the QueA family. As to quaternary structure, monomer.

It is found in the cytoplasm. The enzyme catalyses 7-aminomethyl-7-carbaguanosine(34) in tRNA + S-adenosyl-L-methionine = epoxyqueuosine(34) in tRNA + adenine + L-methionine + 2 H(+). The protein operates within tRNA modification; tRNA-queuosine biosynthesis. Transfers and isomerizes the ribose moiety from AdoMet to the 7-aminomethyl group of 7-deazaguanine (preQ1-tRNA) to give epoxyqueuosine (oQ-tRNA). The sequence is that of S-adenosylmethionine:tRNA ribosyltransferase-isomerase from Borreliella afzelii (strain PKo) (Borrelia afzelii).